The chain runs to 174 residues: MDNGIFIVATIFVVNILYVTIYTVRLLLTMKGYRYLAALSSVFEMIIYVVALSLVLDNLNNIANVLAYAVGFGVGIIVGMKIEERIALGYITVNVITKEYNLDLPNQIRDLGYGVTSWLASGRDGERMMLEILTQRKNERKLYKQIIEIDNGAFIVSSEPKQIHGGFWIKQVRK.

3 helical membrane passes run 4–24, 36–56, and 62–82; these read GIFI…IYTV, LAAL…SLVL, and IANV…GMKI.

Belongs to the UPF0316 family.

The protein localises to the cell membrane. This is UPF0316 protein lin1888 from Listeria innocua serovar 6a (strain ATCC BAA-680 / CLIP 11262).